We begin with the raw amino-acid sequence, 511 residues long: Phosphoenolpyruvate carboxylase (511 aa).

Belongs to the PEPCase type 2 family. As to quaternary structure, homotetramer. The cofactor is Mg(2+).

It carries out the reaction oxaloacetate + phosphate = phosphoenolpyruvate + hydrogencarbonate. Its activity is regulated as follows. Allosterically inhibited by L-aspartate and L-malate. PEPC activity is not affected by allosteric activators of E.coli PEPC such as glucose 6-phosphate, fructose 1,6-bisphosphate, and acetyl coenzyme A. Its function is as follows. Catalyzes the irreversible beta-carboxylation of phosphoenolpyruvate (PEP) to form oxaloacetate (OAA), a four-carbon dicarboxylic acid source for the tricarboxylic acid cycle. This chain is Phosphoenolpyruvate carboxylase, found in Saccharolobus solfataricus (strain ATCC 35092 / DSM 1617 / JCM 11322 / P2) (Sulfolobus solfataricus).